The chain runs to 496 residues: MAGSGVYADIIEGDVFKYYSDGEWKKSSSGKSVAIINPTTRMTQFKVQACTQEEVNKAMETAKKVQKQWAKTPLWKRAELLHKAAAILKEHKAAIADCLVKEIAKPAKDSVTEVVRSGDLVSYCAEEGVRLLGEGKFLVSDSFPGNERTKYCLTSKIPLGVILAIPPFNYPVNLAVSKIGPALIAGNALVLKPPTQGAVACLHMVHCFHLAGFPKGLISCITGKGSEIGDFLTMHPGVNCISFTGGDTGIAISKKAGMVPLQMELGGKDACIVLEDADLDLVASNVIKGGFSYSGQRCTAIKVILVMQSVADTLVEKVNAKVAKLTVGPPEDNSDITPVVSESSANFIEGLVKDAKEKGATFCQEYKREGNLIWPLLLDNVKPDMRIAWEEPFGPILPVIRINSAEEGIHHCNASNFGLQGCVFTRDINKAMLISDAMESGTIQINSAPARGPDHFPFQGLKDSGIGSQGITNSINMMTKIKTTVINLPSPSYTMG.

Substrate is bound by residues R116 and 169 to 170 (NY). The NADP(+) site is built by K192, T195, and D230. 245-249 (GGDTG) lines the NAD(+) pocket. E264 (proton acceptor) is an active-site residue. 297–299 (RCT) provides a ligand contact to substrate. Catalysis depends on C298, which acts as the Nucleophile. E391 lines the NADP(+) pocket. R451 serves as a coordination point for substrate.

It belongs to the aldehyde dehydrogenase family.

It is found in the cytoplasm. Its subcellular location is the cytosol. It catalyses the reaction D-glyceraldehyde 3-phosphate + NADP(+) + H2O = (2R)-3-phosphoglycerate + NADPH + 2 H(+). Competitive inhibition by NADPH, 3-phospho-D-glycerate and ATP. Important as a means of generating NADPH for biosynthetic reactions. May be a main source of cytosolic NADPH for mannitol biosynthesis in leaves. The protein is NADP-dependent glyceraldehyde-3-phosphate dehydrogenase of Apium graveolens (Celery).